A 398-amino-acid chain; its full sequence is MKQLTILGSTGSIGNSTLGVVRANPELFKITALVAGRNVHQMAQQCLEFAPRYAAMSDETSAKALRLILAENGSRTEVYSGEKAACELAAIDDVDQVMAAIVGVAGLPSTLAAIRAGKQVLLANKESLITCGKLFMDEVMHSRAQLLPIDSEHNAIFQSLPEKVQSQLGYSSLSDNGVSRIILTGSGGPLRETPLVQFADVTPDQACAHPNWSMGRKISVDSATMMNKGLEYIEARWLFNASAEQVEVILHPQSVIHSMVRYHDGSVLAQMGTPDMRTPIAHAMAYPMRVNSGVAPLDFCKIRELTFAEPDYQRYPCLKLAIDASNAGQAATTALNAANEISVMAFLDSRIRFTDIAVINRMVVEQLSLPEPASVDEVLVIDRKARDAAVQAIAKLNN.

8 residues coordinate NADPH: threonine 10, glycine 11, serine 12, isoleucine 13, glycine 36, arginine 37, asparagine 38, and asparagine 124. Residue lysine 125 participates in 1-deoxy-D-xylulose 5-phosphate binding. Position 126 (glutamate 126) interacts with NADPH. Position 150 (aspartate 150) interacts with Mn(2+). Residues serine 151, glutamate 152, serine 186, and histidine 209 each contribute to the 1-deoxy-D-xylulose 5-phosphate site. Position 152 (glutamate 152) interacts with Mn(2+). Position 215 (glycine 215) interacts with NADPH. 1-deoxy-D-xylulose 5-phosphate-binding residues include serine 222, asparagine 227, lysine 228, and glutamate 231. Glutamate 231 lines the Mn(2+) pocket.

It belongs to the DXR family. In terms of assembly, homodimer. Mg(2+) serves as cofactor. The cofactor is Mn(2+).

It catalyses the reaction 2-C-methyl-D-erythritol 4-phosphate + NADP(+) = 1-deoxy-D-xylulose 5-phosphate + NADPH + H(+). Its pathway is isoprenoid biosynthesis; isopentenyl diphosphate biosynthesis via DXP pathway; isopentenyl diphosphate from 1-deoxy-D-xylulose 5-phosphate: step 1/6. Catalyzes the NADPH-dependent rearrangement and reduction of 1-deoxy-D-xylulose-5-phosphate (DXP) to 2-C-methyl-D-erythritol 4-phosphate (MEP). The sequence is that of 1-deoxy-D-xylulose 5-phosphate reductoisomerase from Yersinia enterocolitica serotype O:8 / biotype 1B (strain NCTC 13174 / 8081).